The sequence spans 132 residues: MAVSDPIADFLNRIKNGQKARFDKVDIPASRMKASLSRILKEEGYIKNFKLIKDDKQGIIRVQIKYGEHREGAITGIKRVSRPGCRVYVGHDEIPRVMNGMGIGIVSTSKGIMTDRQARKEGIGGELLCSIW.

Belongs to the universal ribosomal protein uS8 family. As to quaternary structure, part of the 30S ribosomal subunit. Contacts proteins S5 and S12.

Its function is as follows. One of the primary rRNA binding proteins, it binds directly to 16S rRNA central domain where it helps coordinate assembly of the platform of the 30S subunit. The chain is Small ribosomal subunit protein uS8 from Syntrophobacter fumaroxidans (strain DSM 10017 / MPOB).